The primary structure comprises 858 residues: Volume-regulated anion channel subunit LRRC8D (858 aa).

Over 1–22 (MFTLAEVASLNDIQPTYRILKP) the chain is Cytoplasmic. Residues 23-48 (WWDVFMDYLAVVMLMVAIFAGTMQLT) form a helical membrane-spanning segment. Residues 49–163 (KDQVVCLPVL…YHLALPWYSK (115 aa)) lie on the Extracellular side of the membrane. Cysteines 54 and 354 form a disulfide. The disordered stretch occupies residues 118-137 (AESTFPSQETKKEKRDPTGR). The segment covering 126–137 (ETKKEKRDPTGR) has biased composition (basic and acidic residues). Residues 164–182 (YFPYLALIHTIILMVSSNF) form a helical membrane-spanning segment. Residues 183-308 (WFKYPKTCSK…EDSDLIYKLY (126 aa)) are Cytoplasmic-facing. The interval 221–251 (SEENKQRITGAQTLPKHVSTSSDEGSPSAST) is disordered. The segment covering 227 to 251 (RITGAQTLPKHVSTSSDEGSPSAST) has biased composition (polar residues). Residues serine 241, serine 242, and serine 246 each carry the phosphoserine modification. The helical transmembrane segment at 309-330 (VVQTLIKTAKFIFILCYTANFV) threads the bilayer. Residues 331-360 (NAISFEHVCKPKVEHLTGYEVFECTHNMAY) are Extracellular-facing. Residues 361–386 (MLKKLLISYISIICVYGFICLYTLFW) traverse the membrane as a helical segment. The Cytoplasmic portion of the chain corresponds to 387 to 858 (LFRIPLKEYS…DVNVPFANGI (472 aa)). 13 LRR repeats span residues 514–534 (NLQE…AFSF), 538–559 (HLRC…VYLL), 561–582 (NLRE…IGLE), 589–609 (HLKI…ITDV), 612–632 (HLTK…NSLK), 636–657 (NVAE…IFSL), 659–680 (NLQE…ISFQ), 684–705 (RLTC…ITHV), 707–728 (NLES…VFSL), 730–751 (KLRC…IGLL), 753–774 (NLQH…LFKC), 776–797 (KLRT…ISQL), and 799–820 (QLTQ…LGQC).

It belongs to the LRRC8 family. Heterohexamer; oligomerizes with other LRRC8 proteins (LRRC8A, LRRC8B, LRRC8C and/or LRRC8E) to form a heterohexamer. In vivo, the subunit composition may depend primarily on expression levels, and heterooligomeric channels containing various proportions of the different LRRC8 proteins may coexist.

The protein localises to the cell membrane. It localises to the endoplasmic reticulum membrane. It carries out the reaction chloride(in) = chloride(out). The enzyme catalyses iodide(out) = iodide(in). The catalysed reaction is taurine(out) = taurine(in). Non-essential component of the volume-regulated anion channel (VRAC, also named VSOAC channel), an anion channel required to maintain a constant cell volume in response to extracellular or intracellular osmotic changes. The VRAC channel conducts iodide better than chloride and can also conduct organic osmolytes like taurine. Plays a redundant role in the efflux of amino acids, such as aspartate, in response to osmotic stress. Channel activity requires LRRC8A plus at least one other family member (LRRC8B, LRRC8C, LRRC8D or LRRC8E); channel characteristics depend on the precise subunit composition. Also acts as a regulator of glucose-sensing in pancreatic beta cells: VRAC currents, generated in response to hypotonicity- or glucose-induced beta cell swelling, depolarize cells, thereby causing electrical excitation, leading to increase glucose sensitivity and insulin secretion. VRAC channels containing LRRC8D inhibit transport of immunoreactive cyclic dinucleotide GMP-AMP (2'-3'-cGAMP), an immune messenger produced in response to DNA virus in the cytosol. This chain is Volume-regulated anion channel subunit LRRC8D, found in Rattus norvegicus (Rat).